Reading from the N-terminus, the 174-residue chain is MDIYIHGYLICLLLFLFRSETACHPLGKRRCEMQAFRIWDVNQKIFYLRNNQLVAGYLQGPNTKLEEKIDVVPIEPHTMFLGIHGGKLCLACVKSGDEIKLKLEAVNITDLNQNREQDKRFAFIRFDNGPTTSFESAACPGWFLCTSLEADQPVGLTNMPTEALKVTKFYFQQD.

The N-terminal stretch at 1-23 (MDIYIHGYLICLLLFLFRSETAC) is a signal peptide. C89 and C139 are disulfide-bonded. An N-linked (GlcNAc...) asparagine glycan is attached at N107.

The protein belongs to the IL-1 family.

It localises to the secreted. Its function is as follows. Anti-inflammatory antagonist of interleukin-1 family of proinflammatory cytokines such as interleukin-1beta/IL1B and interleukin-1alpha/IL1A. Protects from immune dysregulation and uncontrolled systemic inflammation triggered by IL1 for a range of innate stimulatory agents such as pathogens. The protein is Interleukin-1 receptor antagonist protein (IL1RN) of Bos taurus (Bovine).